The primary structure comprises 371 residues: MYNETPIKRRPSTRIYVGNVPIGDGAPIAVQSMTNTKTTDVEATVAQIRALEKVGADIVRVSVPTMDAAEAFKVIKQSVSVPLVADIHFDYRIALKVAEYGVDCLRINPGNIGNEERIRSVVECARDKNIPIRIGVNGGSLEKDLMDKYKEPTPEALLESAMRHVDILDRLNFDQFKVSVKASDVFLAVESYRLLAKQIRQPLHLGITEAGGARAGAVKSAVGLGMLLAEGIGDTLRISLAADPVEEIKVGFDILKSLRIRSRGINFIACPSCSRQEFDVISTVNELERRLEDVTTAMDVSIIGCVVNGPGEALVSHIGLTGGHRKSGYYDEGERQKERFDNDNLVDSLEAKIRAKASQMANRIQVKDTTE.

Residues Cys270, Cys273, Cys305, and Glu312 each coordinate [4Fe-4S] cluster.

It belongs to the IspG family. [4Fe-4S] cluster is required as a cofactor.

It catalyses the reaction (2E)-4-hydroxy-3-methylbut-2-enyl diphosphate + oxidized [flavodoxin] + H2O + 2 H(+) = 2-C-methyl-D-erythritol 2,4-cyclic diphosphate + reduced [flavodoxin]. Its pathway is isoprenoid biosynthesis; isopentenyl diphosphate biosynthesis via DXP pathway; isopentenyl diphosphate from 1-deoxy-D-xylulose 5-phosphate: step 5/6. Functionally, converts 2C-methyl-D-erythritol 2,4-cyclodiphosphate (ME-2,4cPP) into 1-hydroxy-2-methyl-2-(E)-butenyl 4-diphosphate. The polypeptide is 4-hydroxy-3-methylbut-2-en-1-yl diphosphate synthase (flavodoxin) (Shewanella sp. (strain ANA-3)).